Here is a 72-residue protein sequence, read N- to C-terminus: Bowman-Birk type proteinase inhibitor (72 aa).

7 disulfides stabilise this stretch: cysteine 8–cysteine 61, cysteine 9–cysteine 24, cysteine 12–cysteine 57, cysteine 14–cysteine 22, cysteine 31–cysteine 38, cysteine 35–cysteine 50, and cysteine 40–cysteine 48.

It belongs to the Bowman-Birk serine protease inhibitor family.

In terms of biological role, this inhibitor has two domains, each with separate antiprotease activity. 1 mole of inhibitor inhibits either 1 mole of trypsin or 2 moles of chymotrypsin, stoichiometrically. In Vicia sativa subsp. nigra (Common vetch), this protein is Bowman-Birk type proteinase inhibitor.